Here is a 2079-residue protein sequence, read N- to C-terminus: Non-reducing polyketide synthase Dhc5 (2079 aa).

An N-terminal acylcarrier protein transacylase domain (SAT) region spans residues 9–246; it reads LLFGDVTDPW…DELNIHALQH (238 aa). The Ketosynthase family 3 (KS3) domain occupies 366–798; the sequence is NDGIAIVGMA…GGNACLLLED (433 aa). Residues Cys-543, His-678, and His-717 each act as for beta-ketoacyl synthase activity in the active site. The tract at residues 895–1199 is malonyl-CoA:ACP transacylase (MAT) domain; that stretch reads VFVFTGQGSH…MTHSLQPKTS (305 aa). Catalysis depends on Ser-986, which acts as the For acyl/malonyl transferase activity. Residues 1268 to 1414 are N-terminal hotdog fold; sequence EPLISTCAQY…DPTRSQVEWD (147 aa). The PKS/mFAS DH domain occupies 1268 to 1584; it reads EPLISTCAQY…YQELPRATWK (317 aa). The interval 1304–1581 is product template (PT) domain; that stretch reads MDGHKMQGIG…DIRYQELPRA (278 aa). The interval 1435 to 1584 is C-terminal hotdog fold; the sequence is RGHRMQPEVF…YQELPRATWK (150 aa). Positions 1613 to 1639 are disordered; sequence RELQQPSSATVPAQETTIDEPEQQEGE. Residues 1615 to 1628 are compositionally biased toward polar residues; it reads LQQPSSATVPAQET. In terms of domain architecture, Carrier spans 1641–1718; it reads AAGARLFNAI…DLRKEFRANE (78 aa). An O-(pantetheine 4'-phosphoryl)serine modification is found at Ser-1678. Positions 1721 to 1784 are disordered; that stretch reads VENPRFSATP…EQKRPVKIDD (64 aa). The span at 1727-1757 shows a compositional bias: low complexity; that stretch reads SATPSSAEASIPSSPSSLAHPMSDSASSLSP. Over residues 1758–1784 the composition is skewed to basic and acidic residues; that stretch reads SDREEALPLERQSMTKREQKRPVKIDD. The tract at residues 1812 to 2057 is thioesterase (TE) domain; the sequence is ADGTGTIATY…LSVAGDHLDL (246 aa). The For thioesterase activity role is filled by His-2064.

It functions in the pathway mycotoxin biosynthesis. Highly reducing polyketide synthase; part of the gene cluster that mediates the biosynthesis of 10,11-dehydrocurvularin, a prevalent fungal phytotoxin with heat shock response and immune-modulatory activities. The highly reducing polyketide synthase Dhc3 is responsible for biosynthesis up to the tetraketide stage. The non-reducing polyketide synthase Dhc5 then conducts four additional chain extension cycles, producing the unreduced part of the nascent octaketide from C-1 to C-8 in 10,11-dehydrocurvularin. This Alternaria cinerariae protein is Non-reducing polyketide synthase Dhc5.